A 258-amino-acid chain; its full sequence is Polysialic acid transport protein KpsM (258 aa).

The ABC transmembrane type-2 domain maps to 30-251 (LGYLWAILEP…FIGLALYRTR (222 aa)). Helical transmembrane passes span 33-53 (LWAILEPSAHLLILLGIFGYI), 61-81 (ISFPVFLLNGLIPFFIFSSIS), 110-130 (ALLETLIYVAVYILLMLIVWM), 144-164 (VLTWSLLIILSCGIGLIFMVV), 175-195 (LPILLKPLYFISCIMFPLHSI), and 227-247 (GVSLNYLAMFTLVTLFIGLAL).

This sequence belongs to the ABC-2 integral membrane protein family.

Its subcellular location is the cell inner membrane. In terms of biological role, kpsM and KpsT constitute a system for the transport of polysialic acid across the cytoplasmic membrane. The polypeptide is Polysialic acid transport protein KpsM (kpsM) (Escherichia coli).